The chain runs to 233 residues: Mediator of RNA polymerase II transcription subunit 7 (233 aa).

A Glycyl lysine isopeptide (Lys-Gly) (interchain with G-Cter in SUMO1); alternate cross-link involves residue lysine 185. Lysine 185 participates in a covalent cross-link: Glycyl lysine isopeptide (Lys-Gly) (interchain with G-Cter in SUMO2); alternate. The segment at 188-213 (PMDADDSNNCTGQSDQQRENSGHRRD) is disordered. Position 194 is a phosphoserine (serine 194). Basic and acidic residues predominate over residues 203–213 (QQRENSGHRRD).

This sequence belongs to the Mediator complex subunit 7 family. Component of the Mediator complex, which is composed of MED1, MED4, MED6, MED7, MED8, MED9, MED10, MED11, MED12, MED13, MED13L, MED14, MED15, MED16, MED17, MED18, MED19, MED20, MED21, MED22, MED23, MED24, MED25, MED26, MED27, MED29, MED30, MED31, CCNC, CDK8 and CDC2L6/CDK11. The MED12, MED13, CCNC and CDK8 subunits form a distinct module termed the CDK8 module. Mediator containing the CDK8 module is less active than Mediator lacking this module in supporting transcriptional activation. Individual preparations of the Mediator complex lacking one or more distinct subunits have been variously termed ARC, CRSP, DRIP, PC2, SMCC and TRAP.

The protein resides in the nucleus. In terms of biological role, component of the Mediator complex, a coactivator involved in the regulated transcription of nearly all RNA polymerase II-dependent genes. Mediator functions as a bridge to convey information from gene-specific regulatory proteins to the basal RNA polymerase II transcription machinery. Mediator is recruited to promoters by direct interactions with regulatory proteins and serves as a scaffold for the assembly of a functional preinitiation complex with RNA polymerase II and the general transcription factors. This is Mediator of RNA polymerase II transcription subunit 7 (MED7) from Sus scrofa (Pig).